The primary structure comprises 239 residues: tRNA (guanine-N(7)-)-methyltransferase (239 aa).

Positions 69, 94, 121, and 144 each coordinate S-adenosyl-L-methionine. The active site involves D144. Position 148 (K148) interacts with substrate. Residues 150-155 (RHNKRR) are interaction with RNA. Residues D180 and 217-220 (TKFE) each bind substrate.

It belongs to the class I-like SAM-binding methyltransferase superfamily. TrmB family. As to quaternary structure, monomer.

The enzyme catalyses guanosine(46) in tRNA + S-adenosyl-L-methionine = N(7)-methylguanosine(46) in tRNA + S-adenosyl-L-homocysteine. Its pathway is tRNA modification; N(7)-methylguanine-tRNA biosynthesis. Its function is as follows. Catalyzes the formation of N(7)-methylguanine at position 46 (m7G46) in tRNA. The chain is tRNA (guanine-N(7)-)-methyltransferase from Sodalis glossinidius (strain morsitans).